We begin with the raw amino-acid sequence, 558 residues long: Sinalpyl alcohol oxidase Nec3 (558 aa).

The first 28 residues, 1–28 (MATMAILQRTFSFILIFSIALHLKSLFA), serve as a signal peptide directing secretion. 64 to 65 (TA) contributes to the FAD binding site. Residue Asn-76 is glycosylated (N-linked (GlcNAc...) asparagine). FAD contacts are provided by residues 83-84 (ER), Val-131, Ser-135, and 139-142 (NFGF). N-linked (GlcNAc...) asparagine glycosylation occurs at Asn-180. Val-247 provides a ligand contact to FAD. N-linked (GlcNAc...) asparagine glycosylation is found at Asn-308, Asn-386, and Asn-473. Cys-433 and Cys-484 are disulfide-bonded. Residue 492 to 493 (YH) coordinates FAD. His-493 serves as the catalytic Proton donor. Asn-531 acts as the Proton acceptor in catalysis. 532-533 (PQ) provides a ligand contact to FAD.

The protein belongs to the GMC oxidoreductase family. In terms of assembly, monomer. FAD is required as a cofactor. In terms of tissue distribution, confined to nectaries.

It carries out the reaction (E)-sinapyl alcohol + O2 = (E)-sinapaldehyde + H2O2. It participates in alkaloid biosynthesis. Functionally, involved in the production of blood-red nectar containing the alkaloid nesocodin and that serves as a visual attractant for pollinator visitation, including vertebrates such as Phelsuma geckos. The nectar is initially acidic and pale yellow, but slowly becomes alkaline before turning into red within 24 hours. Together with NEC1 and NEC2, facilitates the condensation of sinapaldehyde ((E)-3,5-dimethoxy-4-hydroxycinnamaldehyde) and proline to form nesocodin, a pigment with a stable imine bond. Catalyzes the conversion of sinapyl alcohol to sinapaldehyde. In Nesocodon mauritianus (Blue Mauritius bellflower), this protein is Sinalpyl alcohol oxidase Nec3.